The following is a 255-amino-acid chain: Type III pantothenate kinase (255 aa).

6 to 13 (DVGNTNIV) is an ATP binding site. Substrate-binding positions include Y100 and 107–110 (GADR). D109 functions as the Proton acceptor in the catalytic mechanism. D129 contributes to the K(+) binding site. T132 serves as a coordination point for ATP. Residue T184 coordinates substrate.

This sequence belongs to the type III pantothenate kinase family. In terms of assembly, homodimer. Requires NH4(+) as cofactor. K(+) is required as a cofactor.

It localises to the cytoplasm. The catalysed reaction is (R)-pantothenate + ATP = (R)-4'-phosphopantothenate + ADP + H(+). Its pathway is cofactor biosynthesis; coenzyme A biosynthesis; CoA from (R)-pantothenate: step 1/5. Its function is as follows. Catalyzes the phosphorylation of pantothenate (Pan), the first step in CoA biosynthesis. This is Type III pantothenate kinase from Geobacter sulfurreducens (strain ATCC 51573 / DSM 12127 / PCA).